The primary structure comprises 199 residues: NAD(P)H dehydrogenase (quinone) (199 aa).

A Flavodoxin-like domain is found at 4-190; that stretch reads MLVLYYSAYG…DDARFQGRRV (187 aa). Residues 10-15 and 78-80 contribute to the FMN site; these read SAYGHM and TRY. Tyr12 is a binding site for NAD(+). Trp98 contacts substrate. FMN-binding positions include 113–119 and His134; that span reads STATQHG. The segment at 158 to 181 is disordered; that stretch reads GAPYGMTTTADGDGSRQPSAQELD. The span at 163–177 shows a compositional bias: polar residues; that stretch reads MTTTADGDGSRQPSA.

The protein belongs to the WrbA family. FMN is required as a cofactor.

The catalysed reaction is a quinone + NADH + H(+) = a quinol + NAD(+). It catalyses the reaction a quinone + NADPH + H(+) = a quinol + NADP(+). This is NAD(P)H dehydrogenase (quinone) from Brucella ovis (strain ATCC 25840 / 63/290 / NCTC 10512).